A 161-amino-acid polypeptide reads, in one-letter code: MAEPPPSYLHFVGPAKTRSSSKRHSFSSSAHPASHRLFPCQYCPRKFYTSQALGGHQNAHKRERAAARRNLGVLANSPPILDDNNTFLRPYPCFYQNPFQGSTSGNEPLQEQPTMMTMDGYDPFHPYPYVYPFALSGNNNDGGNGVMEEDEPLDLDLSLRL.

The interval 1 to 33 is disordered; the sequence is MAEPPPSYLHFVGPAKTRSSSKRHSFSSSAHPA. The C2H2-type zinc-finger motif lies at 38–60; the sequence is FPCQYCPRKFYTSQALGGHQNAH. The tract at residues 142 to 161 is disordered; the sequence is GGNGVMEEDEPLDLDLSLRL. The short motif at 155–159 is the EAR-like (transcriptional repression) element; sequence LDLSL.

In terms of tissue distribution, first expressed in developing carpel primordia, and later in stamens and ovules of flower buds.

The protein resides in the nucleus. Its function is as follows. May function as a transcriptional repressor of cellular proliferation that regulates floral determinacy and relative size of basal pattern elements along the proximo-distal axis of the developing gynoecium. This Arabidopsis thaliana (Mouse-ear cress) protein is Zinc finger protein KNUCKLES (KNU).